A 190-amino-acid polypeptide reads, in one-letter code: Threonylcarbamoyl-AMP synthase (190 aa).

In terms of domain architecture, YrdC-like spans 7 to 190 (GDAIAAAIDV…ALTGELFRQG (184 aa)).

Belongs to the SUA5 family. TsaC subfamily.

It localises to the cytoplasm. The catalysed reaction is L-threonine + hydrogencarbonate + ATP = L-threonylcarbamoyladenylate + diphosphate + H2O. In terms of biological role, required for the formation of a threonylcarbamoyl group on adenosine at position 37 (t(6)A37) in tRNAs that read codons beginning with adenine. Catalyzes the conversion of L-threonine, HCO(3)(-)/CO(2) and ATP to give threonylcarbamoyl-AMP (TC-AMP) as the acyladenylate intermediate, with the release of diphosphate. This chain is Threonylcarbamoyl-AMP synthase, found in Shigella dysenteriae serotype 1 (strain Sd197).